The chain runs to 808 residues: Aminotransferase ALT4 (808 aa).

It belongs to the class-II pyridoxal-phosphate-dependent aminotransferase family. BioF subfamily. It depends on pyridoxal 5'-phosphate as a cofactor.

The protein operates within mycotoxin biosynthesis. Its function is as follows. Aminotransferase; part of the gene cluster that mediates the biosynthesis of the host-selective toxins (HSTs) AAL-toxins, sphinganine-analog mycotoxins responsible for Alternaria stem canker on tomato by the tomato pathotype. The biosynthesis starts with the polyketide synthase ALT1-catalyzed C-16 carbon chain assembly from one starter acetyl-CoA unit with malonyl-CoA extender units. ALT1 also selectively transfers methyl groups at the first and the third cycle of chain elongation for AAL toxin. The C-16 polyketide chain is released from the enzyme by a nucleophilic attack of a carbanion, which is derived from R-carbon of glycin by decarboxylation, on the carbonyl carbon of polyketide acyl chain. This step is probably catalyzed by a pyridoxal 5'-phosphate-dependent aminoacyl transferase ALT4. The respective functions of the other enzymes encoded by the cluster have still to be elucidated. The sphingosine N-acyltransferase-like protein ALT7 seems not to act as a resistance/self-tolerance factor against the toxin in the toxin biosynthetic gene cluster, contrary to what is expected. The protein is Aminotransferase ALT4 of Alternaria alternata (Alternaria rot fungus).